A 337-amino-acid chain; its full sequence is Cytoskeleton protein RodZ (337 aa).

Over 1-111 the chain is Cytoplasmic; that stretch reads MNTEATHDQN…LGKRRKKRDG (111 aa). The HTH cro/C1-type domain maps to 19–71; the sequence is LRNAREQLGLSQQAVAERLCLKVSTVRDIEEDKAPADLASTFLRGYIRSYARL. Positions 30–49 form a DNA-binding region, H-T-H motif; sequence QQAVAERLCLKVSTVRDIEE. A helical; Signal-anchor for type II membrane protein membrane pass occupies residues 112-132; it reads WLMTFTWLVLFVVIGLSGAWW. Topologically, residues 133–337 are periplasmic; it reads WQDHKAQQEE…TLNAEQSPAQ (205 aa). Polar residues predominate over residues 145–167; that stretch reads TMADQSSAELSSNSEQGQSVPLN. Residues 145–220 are disordered; it reads TMADQSSAEL…VSPSQANVDT (76 aa). Residues 168–207 show a composition bias toward low complexity; it reads TSTTTDPATTSTPPASVDTTATNTQTPAVTAPAPAVDPQQ. Over residues 208–218 the composition is skewed to polar residues; that stretch reads NAVVSPSQANV.

The protein belongs to the RodZ family.

It is found in the cell inner membrane. In terms of biological role, cytoskeletal protein that is involved in cell-shape control through regulation of the length of the long axis. This is Cytoskeleton protein RodZ from Escherichia coli O17:K52:H18 (strain UMN026 / ExPEC).